The chain runs to 86 residues: Antitoxin VapB33 (86 aa).

In terms of biological role, antitoxin component of a type II toxin-antitoxin (TA) system. Upon expression in M.smegmatis neutralizes the effect of cognate toxin VapC33. The protein is Antitoxin VapB33 (vapB33) of Mycobacterium tuberculosis (strain ATCC 25618 / H37Rv).